A 512-amino-acid chain; its full sequence is Pentatricopeptide repeat-containing protein At1g64583, mitochondrial (512 aa).

The N-terminal 34 residues, 1 to 34, are a transit peptide targeting the mitochondrion; that stretch reads MRRLIVTGIATSTAKGFRRVVNPNLLGGGAAARA. PPR repeat units lie at residues 70–104, 105–139, 140–174, 175–209, 210–244, 245–279, 280–314, 315–349, 350–384, 385–415, 420–454, and 455–489; these read SIVD…GISH, DLYS…GYEP, SIVT…GYEP, NVVV…GLGA, DVVT…SINP, DVVT…SVDP, NNVT…GCFP, NVVT…GFNA, DIFT…RVTP, DIIT…MRES, GIVA…GVKP, and DART…GIIC.

The protein belongs to the PPR family. P subfamily.

It localises to the mitochondrion. The protein is Pentatricopeptide repeat-containing protein At1g64583, mitochondrial of Arabidopsis thaliana (Mouse-ear cress).